The chain runs to 354 residues: Clavesin-1 (354 aa).

The 162-residue stretch at 118 to 279 (IKRALIDGFP…EFGGTLPPYD (162 aa)) folds into the CRAL-TRIO domain. The disordered stretch occupies residues 317 to 354 (RECSPKPMKRSQSVVEAGTLKHEEKGENENTQPLLALD). Positions 335 to 344 (TLKHEEKGEN) are enriched in basic and acidic residues. A compositionally biased stretch (polar residues) spans 345-354 (ENTQPLLALD).

As to quaternary structure, forms a complex with clathrin heavy chain and gamma-adaptin. Expressed in brain with no expression detected in non-neuronal tissues (at protein level).

It localises to the golgi apparatus. Its subcellular location is the trans-Golgi network membrane. It is found in the early endosome membrane. The protein localises to the cytoplasmic vesicle. The protein resides in the clathrin-coated vesicle. In terms of biological role, required for normal morphology of late endosomes and/or lysosomes in neurons. Binds phosphatidylinositol 3,5-bisphosphate (PtdIns(3,5)P2). The chain is Clavesin-1 from Rattus norvegicus (Rat).